The following is a 494-amino-acid chain: Costunolide synthase (494 aa).

The helical transmembrane segment at 3 to 23 (PLTIVSLVVASLFLFAFWALS) threads the bilayer. Cys432 is a heme binding site.

This sequence belongs to the cytochrome P450 family. It depends on heme as a cofactor.

Its subcellular location is the membrane. It carries out the reaction germacra-1(10),4,11(13)-trien-12-oate + reduced [NADPH--hemoprotein reductase] + O2 = (+)-costunolide + oxidized [NADPH--hemoprotein reductase] + 2 H2O. Its function is as follows. Hydroxylates germacrene A acid to 6-alpha-hydroxy-germacrne A acid, a precursor of sesquiterpene lactones that spontaneously undergoes a lactonization which yields costunolide. Costunolide can then spontaneously conjugate to glutathione or cysteine. The sequence is that of Costunolide synthase (CYP71BL3) from Cichorium intybus (Chicory).